The sequence spans 877 residues: DNA polymerase I (877 aa).

The region spanning 177-270 (TPAQFIDLKA…LEDLVYSGPD (94 aa)) is the 5'-3' exonuclease domain. The 3'-5' exonuclease domain maps to 302–465 (DFTIVDQISQ…TEPILLEKLS (164 aa)).

The protein belongs to the DNA polymerase type-A family. As to quaternary structure, single-chain monomer with multiple functions.

The enzyme catalyses DNA(n) + a 2'-deoxyribonucleoside 5'-triphosphate = DNA(n+1) + diphosphate. Its function is as follows. In addition to polymerase activity, this DNA polymerase exhibits 3'-5' and 5'-3' exonuclease activity. The protein is DNA polymerase I (polA) of Streptococcus pneumoniae (strain ATCC BAA-255 / R6).